The sequence spans 216 residues: Proenkephalin-A-B (216 aa).

Propeptides lie at residues 64–85, 93–131, 144–155, 165–175, and 183–207; these read MDEL…LAKN, EYDS…GEMN, STDLEDETRGIQ, VGRPEWWQDYQ, and TRFT…PDME. Residues 114–133 are disordered; that stretch reads PESAIYHDNNSETPGEMNKR.

This sequence belongs to the opioid neuropeptide precursor family. In terms of processing, the N-terminal domain contains 6 conserved cysteines thought to be involved in disulfide bonding and/or processing.

The protein localises to the secreted. Its function is as follows. Enkephalin neuropeptides compete with and mimic the effects of opiate drugs. They play a role in a number of physiologic functions, including pain perception and responses to stress. This Xenopus laevis (African clawed frog) protein is Proenkephalin-A-B (penk-b).